The chain runs to 317 residues: ADP-L-glycero-D-manno-heptose-6-epimerase (317 aa).

NADP(+) is bound by residues Phe-10–Ile-11, Asp-31–Asp-32, Lys-38, Lys-53, Gln-76–Ser-80, and Asn-93. Tyr-140 serves as the catalytic Proton acceptor. Residue Lys-144 participates in NADP(+) binding. A substrate-binding site is contributed by Asn-169. Positions 170 and 178 each coordinate NADP(+). Residue Lys-178 is the Proton acceptor of the active site. Residues Ala-180, His-187, Phe-201 to Cys-204, Arg-214, and Tyr-278 contribute to the substrate site.

Belongs to the NAD(P)-dependent epimerase/dehydratase family. HldD subfamily. In terms of assembly, homopentamer. Requires NADP(+) as cofactor.

It catalyses the reaction ADP-D-glycero-beta-D-manno-heptose = ADP-L-glycero-beta-D-manno-heptose. It participates in nucleotide-sugar biosynthesis; ADP-L-glycero-beta-D-manno-heptose biosynthesis; ADP-L-glycero-beta-D-manno-heptose from D-glycero-beta-D-manno-heptose 7-phosphate: step 4/4. Catalyzes the interconversion between ADP-D-glycero-beta-D-manno-heptose and ADP-L-glycero-beta-D-manno-heptose via an epimerization at carbon 6 of the heptose. In Nitrosococcus oceani (strain ATCC 19707 / BCRC 17464 / JCM 30415 / NCIMB 11848 / C-107), this protein is ADP-L-glycero-D-manno-heptose-6-epimerase.